The following is a 1025-amino-acid chain: Probable outer membrane protein PmpF (1025 aa).

The first 20 residues, 1 to 20, serve as a signal peptide directing secretion; that stretch reads MTRRILPLSLVFIPLSCISA. Positions 654–681 are disordered; sequence NSTETQTANNSIQEQKNTSETFDSNSTT. Residues 659 to 681 show a composition bias toward polar residues; it reads QTANNSIQEQKNTSETFDSNSTT. The Autotransporter domain occupies 748-1025; that stretch reads LLPDDSWFAL…YMNAGGALVF (278 aa).

This sequence belongs to the PMP outer membrane protein family.

It localises to the secreted. It is found in the cell wall. The protein resides in the cell outer membrane. This chain is Probable outer membrane protein PmpF (pmpF), found in Chlamydia muridarum (strain MoPn / Nigg).